Reading from the N-terminus, the 70-residue chain is Small ribosomal subunit protein bS21 (70 aa).

It belongs to the bacterial ribosomal protein bS21 family.

The polypeptide is Small ribosomal subunit protein bS21 (Sulfurovum sp. (strain NBC37-1)).